The following is a 355-amino-acid chain: Holliday junction branch migration complex subunit RuvB (355 aa).

Positions 1 to 26 are disordered; that stretch reads MSIQTDDFASSSPAARRVVSTAPASP. The large ATPase domain (RuvB-L) stretch occupies residues 5–196; the sequence is TDDFASSSPA…FGIVARLEFY (192 aa). Low complexity predominate over residues 9–22; the sequence is ASSSPAARRVVSTA. Residues L35, R36, G77, K80, T81, T82, 143-145, R186, Y196, and R233 contribute to the ATP site; that span reads EDY. Residue T81 coordinates Mg(2+). The segment at 197–267 is small ATPAse domain (RuvB-S); the sequence is SVEELARIVT…IADKALAMLD (71 aa). The interval 270–355 is head domain (RuvB-H); that stretch reads PQGFDVMDRK…TTSGSELFDA (86 aa). Residues R325 and R330 each contribute to the DNA site.

It belongs to the RuvB family. Homohexamer. Forms an RuvA(8)-RuvB(12)-Holliday junction (HJ) complex. HJ DNA is sandwiched between 2 RuvA tetramers; dsDNA enters through RuvA and exits via RuvB. An RuvB hexamer assembles on each DNA strand where it exits the tetramer. Each RuvB hexamer is contacted by two RuvA subunits (via domain III) on 2 adjacent RuvB subunits; this complex drives branch migration. In the full resolvosome a probable DNA-RuvA(4)-RuvB(12)-RuvC(2) complex forms which resolves the HJ.

The protein localises to the cytoplasm. The enzyme catalyses ATP + H2O = ADP + phosphate + H(+). The RuvA-RuvB-RuvC complex processes Holliday junction (HJ) DNA during genetic recombination and DNA repair, while the RuvA-RuvB complex plays an important role in the rescue of blocked DNA replication forks via replication fork reversal (RFR). RuvA specifically binds to HJ cruciform DNA, conferring on it an open structure. The RuvB hexamer acts as an ATP-dependent pump, pulling dsDNA into and through the RuvAB complex. RuvB forms 2 homohexamers on either side of HJ DNA bound by 1 or 2 RuvA tetramers; 4 subunits per hexamer contact DNA at a time. Coordinated motions by a converter formed by DNA-disengaged RuvB subunits stimulates ATP hydrolysis and nucleotide exchange. Immobilization of the converter enables RuvB to convert the ATP-contained energy into a lever motion, pulling 2 nucleotides of DNA out of the RuvA tetramer per ATP hydrolyzed, thus driving DNA branch migration. The RuvB motors rotate together with the DNA substrate, which together with the progressing nucleotide cycle form the mechanistic basis for DNA recombination by continuous HJ branch migration. Branch migration allows RuvC to scan DNA until it finds its consensus sequence, where it cleaves and resolves cruciform DNA. This Methylibium petroleiphilum (strain ATCC BAA-1232 / LMG 22953 / PM1) protein is Holliday junction branch migration complex subunit RuvB.